Reading from the N-terminus, the 769-residue chain is 5-methyltetrahydropteroyltriglutamate--homocysteine methyltransferase (769 aa).

5-methyltetrahydropteroyltri-L-glutamate contacts are provided by residues 16-19 (RELK) and Lys121. The interval 415–450 (SMTERDSPHSSRSPLQREALDLPTLPTTTIGSFPQT) is disordered. Residues 439 to 449 (LPTTTIGSFPQ) show a composition bias toward polar residues. L-homocysteine-binding positions include 444–446 (IGS) and Glu497. Residues 444–446 (IGS) and Glu497 contribute to the L-methionine site. 5-methyltetrahydropteroyltri-L-glutamate contacts are provided by residues 528–529 (RC) and Trp574. Asp612 serves as a coordination point for L-homocysteine. L-methionine is bound at residue Asp612. Residue Glu618 coordinates 5-methyltetrahydropteroyltri-L-glutamate. Positions 654, 656, and 678 each coordinate Zn(2+). Residue His707 is the Proton donor of the active site. Cys739 lines the Zn(2+) pocket.

It belongs to the vitamin-B12 independent methionine synthase family. Zn(2+) serves as cofactor.

The catalysed reaction is 5-methyltetrahydropteroyltri-L-glutamate + L-homocysteine = tetrahydropteroyltri-L-glutamate + L-methionine. It functions in the pathway amino-acid biosynthesis; L-methionine biosynthesis via de novo pathway; L-methionine from L-homocysteine (MetE route): step 1/1. Functionally, catalyzes the transfer of a methyl group from 5-methyltetrahydrofolate to homocysteine resulting in methionine formation. This is 5-methyltetrahydropteroyltriglutamate--homocysteine methyltransferase from Salinibacter ruber (strain DSM 13855 / M31).